A 95-amino-acid chain; its full sequence is MTKSELIEKLATRQSQLSAKEVEAAIKEMLEQMADTLETGDRIEIRGFGSFSLHYRAPRTGRNPKTGTSVELEGKYVPHFKPGKELRERVDAINT.

This sequence belongs to the bacterial histone-like protein family. In terms of assembly, heterodimer of an alpha and a beta chain.

In terms of biological role, this protein is one of the two subunits of integration host factor, a specific DNA-binding protein that functions in genetic recombination as well as in transcriptional and translational control. In Shewanella pealeana (strain ATCC 700345 / ANG-SQ1), this protein is Integration host factor subunit beta.